A 472-amino-acid polypeptide reads, in one-letter code: Methanethiol oxidase (472 aa).

Belongs to the selenium-binding protein family.

Its subcellular location is the nucleus. It is found in the cytoplasm. It localises to the cytosol. The protein resides in the membrane. It catalyses the reaction methanethiol + O2 + H2O = hydrogen sulfide + formaldehyde + H2O2 + H(+). It functions in the pathway organosulfur degradation. In terms of biological role, catalyzes the oxidation of methanethiol, an organosulfur compound known to be produced in substantial amounts by gut bacteria. Selenium-binding protein which may be involved in the sensing of reactive xenobiotics in the cytoplasm. May be involved in intra-Golgi protein transport. The protein is Methanethiol oxidase (selenbp1) of Xenopus tropicalis (Western clawed frog).